The primary structure comprises 304 residues: Solute carrier family 25 member 34 (304 aa).

Solcar repeat units lie at residues 4 to 97, 101 to 194, and 204 to 295; these read VPPA…ACQA, QQPG…AKAW, and DSWL…LRKL. The next 6 membrane-spanning stretches (helical) occupy residues 7-27, 45-65, 98-120, 170-191, 206-226, and 278-301; these read AVDL…TNPL, TYPR…RADG, GLSQ…GAFV, VGGA…FASA, WLVA…VMTP, and LGPH…WGQH.

Belongs to the mitochondrial carrier (TC 2.A.29) family.

The protein resides in the mitochondrion inner membrane. It catalyses the reaction a dicarboxylate(in) + sulfate(out) = a dicarboxylate(out) + sulfate(in). Functionally, putative antiporter that exchanges dicarboxylates and sulfur oxoanions across the inner membrane of mitochondria. This is Solute carrier family 25 member 34 (SLC25A34) from Bos taurus (Bovine).